Here is a 156-residue protein sequence, read N- to C-terminus: Small ribosomal subunit protein uS7 (156 aa).

It belongs to the universal ribosomal protein uS7 family. As to quaternary structure, part of the 30S ribosomal subunit. Contacts proteins S9 and S11.

Its function is as follows. One of the primary rRNA binding proteins, it binds directly to 16S rRNA where it nucleates assembly of the head domain of the 30S subunit. Is located at the subunit interface close to the decoding center, probably blocks exit of the E-site tRNA. The chain is Small ribosomal subunit protein uS7 from Phytoplasma mali (strain AT).